Here is a 623-residue protein sequence, read N- to C-terminus: Chaperone protein HtpG (623 aa).

The interval 1-336 (MVSKQQTMGF…ASDLPLNISR (336 aa)) is a; substrate-binding. The b stretch occupies residues 337–550 (EILQDNKQVE…EQDMGLEMQR (214 aa)). Positions 551 to 623 (ILQAAGQQVP…NRVNRLLVSS (73 aa)) are c.

This sequence belongs to the heat shock protein 90 family. In terms of assembly, homodimer.

It is found in the cytoplasm. Molecular chaperone. Has ATPase activity. The sequence is that of Chaperone protein HtpG from Legionella pneumophila (strain Paris).